We begin with the raw amino-acid sequence, 159 residues long: uncharacterized protein (159 aa).

Residues Q4 to F24 traverse the membrane as a helical segment.

The protein resides in the membrane. This is an uncharacterized protein from Acheta domesticus (House cricket).